Reading from the N-terminus, the 191-residue chain is Ion-translocating oxidoreductase complex subunit B (191 aa).

A hydrophobic region spans residues 1 to 26 (MSAVLIAVLALLALCLLGGAILGFAA). The 4Fe-4S domain occupies 32–90 (EGDPIAEQINALLPQTQCGQCGYPGCKPYAEAIAGGDKINKCPPGGEATIQALADLLDV). Cysteine 49, cysteine 52, cysteine 57, cysteine 73, cysteine 114, cysteine 117, cysteine 120, cysteine 124, cysteine 144, cysteine 147, cysteine 150, and cysteine 154 together coordinate [4Fe-4S] cluster. 2 4Fe-4S ferredoxin-type domains span residues 105–134 (MVAYIREAECIGCTKCIQACPVDAIVGAAR) and 135–164 (QMHTVIISECTGCDLCVEPCPVDCIDMIEV).

This sequence belongs to the 4Fe4S bacterial-type ferredoxin family. RnfB subfamily. As to quaternary structure, the complex is composed of six subunits: RnfA, RnfB, RnfC, RnfD, RnfE and RnfG. Requires [4Fe-4S] cluster as cofactor.

It is found in the cell inner membrane. Functionally, part of a membrane-bound complex that couples electron transfer with translocation of ions across the membrane. This Stutzerimonas stutzeri (strain A1501) (Pseudomonas stutzeri) protein is Ion-translocating oxidoreductase complex subunit B.